A 113-amino-acid chain; its full sequence is Protein USP1 (113 aa).

An N-terminal signal peptide occupies residues 1–18; sequence MKITMLFAALSAASGAFA. 6 repeat units span residues 32–37, 40–45, 46–49, 50–53, 59–65, and 69–75. The 2 X 6 AA repeats stretch occupies residues 32–45; that stretch reads IGAGVGIGIGAGVG. Residues 46-53 are 2 X 4 AA approximate tandem repeats; that stretch reads PYGYPYGA. The tract at residues 59-75 is 2 X 7 AA approximate repeats; it reads LQLLPLRWLSLQWIPLR.

The protein resides in the secreted. The polypeptide is Protein USP1 (USP1) (Puccinia graminis (Black stem rust fungus)).